We begin with the raw amino-acid sequence, 807 residues long: 1-phosphatidylinositol 4,5-bisphosphate phosphodiesterase delta-4 (807 aa).

Residues 16 to 124 (LLMQEGTMMR…WMRGLQLLVD (109 aa)) form the PH domain. Residues 26-53 (KVRTKSWKKLRYFRLQNDGMTVWHGSQP) form a substrate binding region. 3 consecutive EF-hand domains span residues 134 to 169 (QMDQMLNEWFQQADRNQDGRMSFREAQRLLLLMNVE), 170 to 205 (MDEEYAFSLFQEADVTQSDDLGSEEFVQFYKALTKR), and 203 to 237 (TKRTEIEEIFEDFSSDKQKLTLLEFVDFLRKEQKE). Residues Asp147, Asn149, Asp151, Arg153, Glu158, Asp183, Ser187, Asp189, and Glu194 each contribute to the Ca(2+) site. A GBA motif is present at residues 213–243 (EDFSSDKQKLTLLEFVDFLRKEQKEKDHAPD). The region spanning 290-435 (QDMTQPLSHY…LRGKILVKGK (146 aa)) is the PI-PLC X-box domain. Residue His305 is part of the active site. Ca(2+)-binding residues include Asn306, Glu335, and Asp337. Residue His350 is part of the active site. Glu384 provides a ligand contact to Ca(2+). Residues Lys433 and Lys435 each coordinate substrate. The tract at residues 442-490 (VDKEEEEEEEEEELEKDEGPDLDPASPELDTQPQPETQGQAAGNKKERK) is disordered. Over residues 443 to 462 (DKEEEEEEEEEELEKDEGPD) the composition is skewed to acidic residues. A compositionally biased stretch (polar residues) spans 470–482 (LDTQPQPETQGQA). Residues 538-654 (LSALVVYLRT…GYVLKPEFLR (117 aa)) enclose the PI-PLC Y-box domain. Residues Ser567 and Arg594 each coordinate substrate. A C2 domain is found at 654 to 781 (RDTQSSFNPE…QGYRHVSLLS (128 aa)). 4 residues coordinate Ca(2+): Asp697, Asn721, Asp750, and Tyr751. The PDZ-binding signature appears at 776–779 (HVSL).

In terms of assembly, interacts with GRIP1. Interacts (via GBA motif) with guanine nucleotide-binding protein G(i) alpha subunit GNAI3 (inactive GDP-bound form)l low-affinity interaction. The cofactor is Ca(2+).

The protein localises to the membrane. The protein resides in the nucleus. It localises to the cytoplasm. It is found in the endoplasmic reticulum. It catalyses the reaction a 1,2-diacyl-sn-glycero-3-phospho-(1D-myo-inositol-4,5-bisphosphate) + H2O = 1D-myo-inositol 1,4,5-trisphosphate + a 1,2-diacyl-sn-glycerol + H(+). It carries out the reaction a 1,2-diacyl-sn-glycero-3-phospho-(1D-myo-inositol) + H2O = 1D-myo-inositol 1-phosphate + a 1,2-diacyl-sn-glycerol + H(+). Hydrolyzes the phosphatidylinositol 4,5-bisphosphate (PIP2) to generate 2 second messenger molecules diacylglycerol (DAG) and inositol 1,4,5-trisphosphate (IP3). DAG mediates the activation of protein kinase C (PKC), while IP3 releases Ca(2+) from intracellular stores. Required for acrosome reaction in sperm during fertilization, probably by acting as an important enzyme for intracellular Ca(2+) mobilization in the zona pellucida-induced acrosome reaction. May play a role in cell growth. Modulates the liver regeneration in cooperation with nuclear PKC. Overexpression up-regulates the Erk signaling pathway and proliferation. The polypeptide is 1-phosphatidylinositol 4,5-bisphosphate phosphodiesterase delta-4 (Mus musculus (Mouse)).